The following is a 296-amino-acid chain: Cytidine deaminase (296 aa).

2 consecutive CMP/dCMP-type deaminase domains span residues 48–168 and 187–296; these read DVDA…FGPV and QNVN…FIEE. 89-91 contacts substrate; it reads NME. Zn(2+) is bound at residue H102. The Proton donor role is filled by E104. 2 residues coordinate Zn(2+): C129 and C132.

This sequence belongs to the cytidine and deoxycytidylate deaminase family. Homodimer. Requires Zn(2+) as cofactor.

It carries out the reaction cytidine + H2O + H(+) = uridine + NH4(+). The enzyme catalyses 2'-deoxycytidine + H2O + H(+) = 2'-deoxyuridine + NH4(+). Its function is as follows. This enzyme scavenges exogenous and endogenous cytidine and 2'-deoxycytidine for UMP synthesis. The protein is Cytidine deaminase of Pectobacterium atrosepticum (strain SCRI 1043 / ATCC BAA-672) (Erwinia carotovora subsp. atroseptica).